Here is a 109-residue protein sequence, read N- to C-terminus: Sperm-specific class P protein 19 (109 aa).

The 109-residue stretch at 1 to 109 folds into the MSP domain; sequence MSLTADPPAC…TVTIPMSATA (109 aa).

Monomer. Expressed at higher level in testis.

This Caenorhabditis elegans protein is Sperm-specific class P protein 19 (ssp-19).